The chain runs to 252 residues: Imidazole glycerol phosphate synthase subunit HisF (252 aa).

Active-site residues include aspartate 11 and aspartate 130.

Belongs to the HisA/HisF family. As to quaternary structure, heterodimer of HisH and HisF.

The protein localises to the cytoplasm. The catalysed reaction is 5-[(5-phospho-1-deoxy-D-ribulos-1-ylimino)methylamino]-1-(5-phospho-beta-D-ribosyl)imidazole-4-carboxamide + L-glutamine = D-erythro-1-(imidazol-4-yl)glycerol 3-phosphate + 5-amino-1-(5-phospho-beta-D-ribosyl)imidazole-4-carboxamide + L-glutamate + H(+). It participates in amino-acid biosynthesis; L-histidine biosynthesis; L-histidine from 5-phospho-alpha-D-ribose 1-diphosphate: step 5/9. Its function is as follows. IGPS catalyzes the conversion of PRFAR and glutamine to IGP, AICAR and glutamate. The HisF subunit catalyzes the cyclization activity that produces IGP and AICAR from PRFAR using the ammonia provided by the HisH subunit. The sequence is that of Imidazole glycerol phosphate synthase subunit HisF from Staphylococcus aureus (strain USA300).